A 261-amino-acid polypeptide reads, in one-letter code: Hemin import ATP-binding protein HmuV (261 aa).

The 237-residue stretch at 7–243 folds into the ABC transporter domain; that stretch reads LRGQNLSLQF…EIIDAVYGYK (237 aa). 39–46 lines the ATP pocket; that stretch reads GPNGAGKS.

Belongs to the ABC transporter superfamily. Heme (hemin) importer (TC 3.A.1.14.5) family. As to quaternary structure, the complex is composed of two ATP-binding proteins (HmuV), two transmembrane proteins (HmuU) and a solute-binding protein (HmuT).

The protein resides in the cell inner membrane. In terms of biological role, part of the ABC transporter complex HmuTUV involved in hemin import. Responsible for energy coupling to the transport system. The protein is Hemin import ATP-binding protein HmuV of Vibrio vulnificus (strain YJ016).